The following is a 362-amino-acid chain: MPTFPQSFPMNGGDGPHSYIHNSSYQKVAIDGAKEKTSEAILKNLDLELLNRNSDENILRIADFGCSIGPNTFEVVQNIIDTVKQKNLKENNAYIGAPLEFQVCFNDQPNNDFNTLFRTQPISSKQAYLSVGVPGSFHGRVLPKNSLHIGHITYALHWLSTVPQHVCDKKSPALNKSYIQCNNLVEEVTEAYRVQFKKDMGDFLGARAEELVSGGLMILSGQCLPDGVPKALTWQGVVIDMIGDCLMDMAKQGITTKEKIELFSLPIYIPHISEFKAEIERNENFSIETMEKISHPMDYKPLTNDFITSMFRAILNTIIEEHFGDGVVNELFDRFAKKLNKYPIDFKRCKKYVNYFIVLKRK.

S-adenosyl-L-homocysteine is bound by residues tyrosine 19, cysteine 66, asparagine 71, aspartate 107, serine 136, and phenylalanine 137. Positions 175, 261, and 263 each coordinate Mg(2+).

The protein belongs to the methyltransferase superfamily. Type-7 methyltransferase family. In terms of assembly, homodimer. The cofactor is Mg(2+).

The polypeptide is Probable S-adenosylmethionine-dependent methyltransferase At5g37990 (Arabidopsis thaliana (Mouse-ear cress)).